The following is an 81-amino-acid chain: Cortexin-2 (81 aa).

Residues 29–49 (TGFAFVGILCIFLGLLIIRCF) form a helical membrane-spanning segment.

The protein belongs to the cortexin family.

It localises to the membrane. This chain is Cortexin-2 (Ctxn2), found in Mus musculus (Mouse).